We begin with the raw amino-acid sequence, 347 residues long: MIVLGVESSCDETGVGLVSEGVLLGDALASSMDAHARFGGVVPEVAARAHLEAIVPVMHEALGKAGLDLADVDAVAVTAGPGLSTAVQVGLASAKALAFALGKPLYGVHHLAGHAAVDVLEHGPLPRRCVALVVSGGHTSLLLLGDLARDPIVHLGDTIDDAAGEAFDKVARVLGLGYPGGPSIDRAARDGDPRAIAFPRALSRAQDPAYGFSFSGVKTAVARWVEARQDAGGEVPVADVAASFQEAVADVLTRKAVAACREHGVDALLLVGGVAANTRVRALAEQRCAAAGLELRVPPIRLCTDNGAMIAAVGDLLVRAGAPASGLDLGADPSAPLTGALLAGPWS.

Fe cation is bound by residues His-110 and His-114. Substrate-binding positions include 133–137, Asp-168, Gly-181, Asp-185, and Asn-277; that span reads VVSGG. Asp-305 serves as a coordination point for Fe cation.

It belongs to the KAE1 / TsaD family. Fe(2+) serves as cofactor.

The protein resides in the cytoplasm. The enzyme catalyses L-threonylcarbamoyladenylate + adenosine(37) in tRNA = N(6)-L-threonylcarbamoyladenosine(37) in tRNA + AMP + H(+). Its function is as follows. Required for the formation of a threonylcarbamoyl group on adenosine at position 37 (t(6)A37) in tRNAs that read codons beginning with adenine. Is involved in the transfer of the threonylcarbamoyl moiety of threonylcarbamoyl-AMP (TC-AMP) to the N6 group of A37, together with TsaE and TsaB. TsaD likely plays a direct catalytic role in this reaction. This is tRNA N6-adenosine threonylcarbamoyltransferase from Kineococcus radiotolerans (strain ATCC BAA-149 / DSM 14245 / SRS30216).